A 641-amino-acid chain; its full sequence is Macrolide export ATP-binding/permease protein MacB (641 aa).

In terms of domain architecture, ABC transporter spans 2-240; it reads IKLENIKKSF…LKQNLKEIKP (239 aa). 38–45 is a binding site for ATP; the sequence is GQSGSGKS. 4 consecutive transmembrane segments (helical) span residues 268–288, 516–536, 565–585, and 601–621; these read FLTM…VALA, LLIS…VMNI, FLIE…GLAY, and IFST…GIVF.

The protein belongs to the ABC transporter superfamily. Macrolide exporter (TC 3.A.1.122) family. Homodimer.

It is found in the cell inner membrane. Its function is as follows. Non-canonical ABC transporter that contains transmembrane domains (TMD), which form a pore in the inner membrane, and an ATP-binding domain (NBD), which is responsible for energy generation. Confers resistance against macrolides. This Campylobacter fetus subsp. fetus (strain 82-40) protein is Macrolide export ATP-binding/permease protein MacB.